A 1637-amino-acid chain; its full sequence is Acrosomal protein KIAA1210 (1637 aa).

Disordered regions lie at residues 44-121 (RFSS…LSIS), 141-293 (RTTT…KNEW), 341-404 (PTTT…KKKD), 438-759 (VCGE…SQSE), 865-896 (PKLP…EGST), 935-975 (SKYS…FQPL), 1017-1057 (LQPW…IPSQ), 1090-1137 (FPFQ…SRRA), 1182-1238 (SQTI…SKSF), and 1539-1558 (NKGD…PAFS). Residues 103–114 (HRSKSLKIKSQR) show a composition bias toward basic residues. The span at 141 to 156 (RTTTTFRRRSSQCSST) shows a compositional bias: low complexity. Positions 170–190 (SESSTQQFSGFSTPATSQGCL) are enriched in polar residues. A compositionally biased stretch (basic and acidic residues) spans 229–249 (AKEKTTTKTKEAEQGEQKVDS). The span at 250 to 261 (TELSSQEQSSKT) shows a compositional bias: low complexity. Residues 341–353 (PTTTEAEVTTVQK) are compositionally biased toward polar residues. Over residues 355–374 (PSDKGDVERELADIDVEAQK) the composition is skewed to basic and acidic residues. Residues 508–526 (TGETSSDSKSTSEYESSSE) show a composition bias toward low complexity. Acidic residues predominate over residues 550–572 (ADDEEDGDDEKEEKDNDDDDEEN). Residues 689–698 (DLSSSEQEQQ) show a composition bias toward low complexity. 5 stretches are compositionally biased toward polar residues: residues 745-759 (SPTQ…SQSE), 879-896 (GKQS…EGST), 935-956 (SKYS…STSA), 964-975 (SQPSVTPKFQPL), and 1017-1030 (LQPW…QVSV).

In terms of assembly, interacts with TOP2B. Predominantly expressed in testis (at protein level).

The protein localises to the cytoplasmic vesicle. The protein resides in the secretory vesicle. It is found in the acrosome. The polypeptide is Acrosomal protein KIAA1210 (Mus musculus (Mouse)).